We begin with the raw amino-acid sequence, 81 residues long: Putative sulfur carrier protein VNG_5061C/VNG_5236C/VNG_6059C/VNG_6467C (81 aa).

Cysteine 18 functions as the Cysteine persulfide intermediate in the catalytic mechanism.

The protein belongs to the sulfur carrier protein TusA family.

This Halobacterium salinarum (strain ATCC 700922 / JCM 11081 / NRC-1) (Halobacterium halobium) protein is Putative sulfur carrier protein VNG_5061C/VNG_5236C/VNG_6059C/VNG_6467C.